Here is a 98-residue protein sequence, read N- to C-terminus: NADH-ubiquinone oxidoreductase chain 4L (98 aa).

3 helical membrane passes run 1–21, 29–49, and 61–81; these read MSITTLNIMVAFTMALLGMFT, SLLCLEGMMLSLFMLATIVSL, and VILLVFAACEAAVGLALLVMV.

The protein belongs to the complex I subunit 4L family. In terms of assembly, core subunit of respiratory chain NADH dehydrogenase (Complex I) which is composed of 45 different subunits.

It localises to the mitochondrion inner membrane. The enzyme catalyses a ubiquinone + NADH + 5 H(+)(in) = a ubiquinol + NAD(+) + 4 H(+)(out). Its function is as follows. Core subunit of the mitochondrial membrane respiratory chain NADH dehydrogenase (Complex I) which catalyzes electron transfer from NADH through the respiratory chain, using ubiquinone as an electron acceptor. Part of the enzyme membrane arm which is embedded in the lipid bilayer and involved in proton translocation. This is NADH-ubiquinone oxidoreductase chain 4L (MT-ND4L) from Ochotona collaris (Collared pika).